The sequence spans 1351 residues: D-lysergyl-peptide-synthetase subunit 2 (1351 aa).

An adenylation (A) domain region spans residues 285-684 (RCLSQPTASA…GRKDTQVKLR (400 aa)). The Carrier domain maps to 828 to 904 (APQTTTEKLL…ALACVVRSGK (77 aa)). At Ser865 the chain carries O-(pantetheine 4'-phosphoryl)serine. A condensation (C) domain region spans residues 941-1340 (EDVYPCTPLQ…LIRDILAVPQ (400 aa)).

This sequence belongs to the NRP synthetase family.

Its pathway is alkaloid biosynthesis; ergot alkaloid biosynthesis. In terms of biological role, D-lysergyl-peptide-synthetase subunit 2; part of the gene cluster that mediates the biosynthesis of fungal ergot alkaloid ergovaline, the predominant ergopeptine product in E.festucae var. lolii. DmaW catalyzes the first step of ergot alkaloid biosynthesis by condensing dimethylallyl diphosphate (DMAP) and tryptophan to form 4-dimethylallyl-L-tryptophan. The second step is catalyzed by the methyltransferase easF that methylates 4-dimethylallyl-L-tryptophan in the presence of S-adenosyl-L-methionine, resulting in the formation of 4-dimethylallyl-L-abrine. The catalase easC and the FAD-dependent oxidoreductase easE then transform 4-dimethylallyl-L-abrine to chanoclavine-I which is further oxidized by easD in the presence of NAD(+), resulting in the formation of chanoclavine-I aldehyde. Agroclavine dehydrogenase easG then mediates the conversion of chanoclavine-I aldehyde to agroclavine via a non-enzymatic adduct reaction: the substrate is an iminium intermediate that is formed spontaneously from chanoclavine-I aldehyde in the presence of glutathione. The presence of easA is not required to complete this reaction. Further conversion of agroclavine to paspalic acid is a two-step process involving oxidation of agroclavine to elymoclavine and of elymoclavine to paspalic acid, the second step being performed by the elymoclavine oxidase cloA. Paspalic acid is then further converted to D-lysergic acid. Ergovaline is assembled from D-lysergic acid and three different amino acids by the D-lysergyl-peptide-synthetase composed of a monomudular (lpsB) and a trimodular (lpsA) nonribosomal peptide synthetase subunit. The protein is D-lysergyl-peptide-synthetase subunit 2 of Epichloe festucae var. lolii (Neotyphodium lolii).